The sequence spans 354 residues: Holliday junction branch migration complex subunit RuvB (354 aa).

The tract at residues Met1–Tyr183 is large ATPase domain (RuvB-L). Residues Arg23, Gly64, Lys67, Thr68, Ser69, Glu130–Phe132, Arg173, Tyr183, and Arg220 each bind ATP. Thr68 is a binding site for Mg(2+). A small ATPAse domain (RuvB-S) region spans residues Ser184–Asp254. Residues Ala257–Pro354 form a head domain (RuvB-H) region. DNA is bound by residues Arg312 and Arg317. The disordered stretch occupies residues Thr330–Pro354.

This sequence belongs to the RuvB family. As to quaternary structure, homohexamer. Forms an RuvA(8)-RuvB(12)-Holliday junction (HJ) complex. HJ DNA is sandwiched between 2 RuvA tetramers; dsDNA enters through RuvA and exits via RuvB. An RuvB hexamer assembles on each DNA strand where it exits the tetramer. Each RuvB hexamer is contacted by two RuvA subunits (via domain III) on 2 adjacent RuvB subunits; this complex drives branch migration. In the full resolvosome a probable DNA-RuvA(4)-RuvB(12)-RuvC(2) complex forms which resolves the HJ.

The protein localises to the cytoplasm. It catalyses the reaction ATP + H2O = ADP + phosphate + H(+). The RuvA-RuvB-RuvC complex processes Holliday junction (HJ) DNA during genetic recombination and DNA repair, while the RuvA-RuvB complex plays an important role in the rescue of blocked DNA replication forks via replication fork reversal (RFR). RuvA specifically binds to HJ cruciform DNA, conferring on it an open structure. The RuvB hexamer acts as an ATP-dependent pump, pulling dsDNA into and through the RuvAB complex. RuvB forms 2 homohexamers on either side of HJ DNA bound by 1 or 2 RuvA tetramers; 4 subunits per hexamer contact DNA at a time. Coordinated motions by a converter formed by DNA-disengaged RuvB subunits stimulates ATP hydrolysis and nucleotide exchange. Immobilization of the converter enables RuvB to convert the ATP-contained energy into a lever motion, pulling 2 nucleotides of DNA out of the RuvA tetramer per ATP hydrolyzed, thus driving DNA branch migration. The RuvB motors rotate together with the DNA substrate, which together with the progressing nucleotide cycle form the mechanistic basis for DNA recombination by continuous HJ branch migration. Branch migration allows RuvC to scan DNA until it finds its consensus sequence, where it cleaves and resolves cruciform DNA. This Salinispora arenicola (strain CNS-205) protein is Holliday junction branch migration complex subunit RuvB.